Here is a 299-residue protein sequence, read N- to C-terminus: ATP phosphoribosyltransferase (299 aa).

It belongs to the ATP phosphoribosyltransferase family. Long subfamily. As to quaternary structure, equilibrium between an active dimeric form, an inactive hexameric form and higher aggregates. Interconversion between the various forms is largely reversible and is influenced by the natural substrates and inhibitors of the enzyme. Requires Mg(2+) as cofactor.

Its subcellular location is the cytoplasm. The enzyme catalyses 1-(5-phospho-beta-D-ribosyl)-ATP + diphosphate = 5-phospho-alpha-D-ribose 1-diphosphate + ATP. It functions in the pathway amino-acid biosynthesis; L-histidine biosynthesis; L-histidine from 5-phospho-alpha-D-ribose 1-diphosphate: step 1/9. Feedback inhibited by histidine. In terms of biological role, catalyzes the condensation of ATP and 5-phosphoribose 1-diphosphate to form N'-(5'-phosphoribosyl)-ATP (PR-ATP). Has a crucial role in the pathway because the rate of histidine biosynthesis seems to be controlled primarily by regulation of HisG enzymatic activity. The sequence is that of ATP phosphoribosyltransferase from Proteus mirabilis (strain HI4320).